The following is a 379-amino-acid chain: Cytochrome b (379 aa).

4 consecutive transmembrane segments (helical) span residues 33–53 (FGSL…FLAM), 77–98 (WLIR…YFHI), 113–133 (WNMG…GYVL), and 178–198 (FFAF…IHLL). Residues His83 and His97 each coordinate heme b. Heme b contacts are provided by His182 and His196. Residue His201 participates in a ubiquinone binding. Transmembrane regions (helical) follow at residues 226 to 246 (IKDI…VMFS), 288 to 308 (LGGV…PILH), 320 to 340 (LSQC…WIGG), and 347 to 367 (FITI…ILMP).

The protein belongs to the cytochrome b family. In terms of assembly, the cytochrome bc1 complex contains 11 subunits: 3 respiratory subunits (MT-CYB, CYC1 and UQCRFS1), 2 core proteins (UQCRC1 and UQCRC2) and 6 low-molecular weight proteins (UQCRH/QCR6, UQCRB/QCR7, UQCRQ/QCR8, UQCR10/QCR9, UQCR11/QCR10 and a cleavage product of UQCRFS1). This cytochrome bc1 complex then forms a dimer. The cofactor is heme b.

The protein localises to the mitochondrion inner membrane. Component of the ubiquinol-cytochrome c reductase complex (complex III or cytochrome b-c1 complex) that is part of the mitochondrial respiratory chain. The b-c1 complex mediates electron transfer from ubiquinol to cytochrome c. Contributes to the generation of a proton gradient across the mitochondrial membrane that is then used for ATP synthesis. This Ctenomys leucodon (White-toothed tuco-tuco) protein is Cytochrome b (MT-CYB).